A 3583-amino-acid chain; its full sequence is Surfactin synthase subunit 2 (3583 aa).

3 consecutive Carrier domains span residues 965 to 1039 (APKT…EENE), 2005 to 2080 (APET…EASA), and 3034 to 3108 (APTT…ERAE). O-(pantetheine 4'-phosphoryl)serine occurs at positions 999, 2040, and 3069.

Belongs to the ATP-dependent AMP-binding enzyme family. The cofactor is pantetheine 4'-phosphate.

Its pathway is antibiotic biosynthesis; surfactin biosynthesis. Its function is as follows. This protein is a multifunctional enzyme able to activate and polymerize the amino acids Leu, Glu, Asp and Val. Activation sites for these AA consist of individual domains. The protein is Surfactin synthase subunit 2 (srfAB) of Bacillus subtilis (strain 168).